Reading from the N-terminus, the 288-residue chain is Diaminopimelate epimerase (288 aa).

Asn13, Gln46, and Asn66 together coordinate substrate. Cys75 acts as the Proton donor in catalysis. Substrate contacts are provided by residues 76 to 77 (GN), Asn166, Asn199, and 217 to 218 (ER). Residue Cys226 is the Proton acceptor of the active site. 227–228 (GT) is a substrate binding site.

It belongs to the diaminopimelate epimerase family. As to quaternary structure, homodimer.

Its subcellular location is the cytoplasm. It catalyses the reaction (2S,6S)-2,6-diaminopimelate = meso-2,6-diaminopimelate. Its pathway is amino-acid biosynthesis; L-lysine biosynthesis via DAP pathway; DL-2,6-diaminopimelate from LL-2,6-diaminopimelate: step 1/1. Its function is as follows. Catalyzes the stereoinversion of LL-2,6-diaminopimelate (L,L-DAP) to meso-diaminopimelate (meso-DAP), a precursor of L-lysine and an essential component of the bacterial peptidoglycan. The chain is Diaminopimelate epimerase from Cupriavidus taiwanensis (strain DSM 17343 / BCRC 17206 / CCUG 44338 / CIP 107171 / LMG 19424 / R1) (Ralstonia taiwanensis (strain LMG 19424)).